Consider the following 173-residue polypeptide: ATP-dependent protease subunit HslV (173 aa).

Residue Thr2 is part of the active site. Na(+) is bound by residues Gly158, Asp161, and Ser164.

It belongs to the peptidase T1B family. HslV subfamily. As to quaternary structure, a double ring-shaped homohexamer of HslV is capped on each side by a ring-shaped HslU homohexamer. The assembly of the HslU/HslV complex is dependent on binding of ATP.

The protein resides in the cytoplasm. The enzyme catalyses ATP-dependent cleavage of peptide bonds with broad specificity.. Its activity is regulated as follows. Allosterically activated by HslU binding. Protease subunit of a proteasome-like degradation complex believed to be a general protein degrading machinery. The protein is ATP-dependent protease subunit HslV of Haemophilus ducreyi (strain 35000HP / ATCC 700724).